Here is a 299-residue protein sequence, read N- to C-terminus: ATP phosphoribosyltransferase (299 aa).

This sequence belongs to the ATP phosphoribosyltransferase family. Long subfamily. The cofactor is Mg(2+).

Its subcellular location is the cytoplasm. The enzyme catalyses 1-(5-phospho-beta-D-ribosyl)-ATP + diphosphate = 5-phospho-alpha-D-ribose 1-diphosphate + ATP. It functions in the pathway amino-acid biosynthesis; L-histidine biosynthesis; L-histidine from 5-phospho-alpha-D-ribose 1-diphosphate: step 1/9. Its activity is regulated as follows. Feedback inhibited by histidine. Catalyzes the condensation of ATP and 5-phosphoribose 1-diphosphate to form N'-(5'-phosphoribosyl)-ATP (PR-ATP). Has a crucial role in the pathway because the rate of histidine biosynthesis seems to be controlled primarily by regulation of HisG enzymatic activity. This Baumannia cicadellinicola subsp. Homalodisca coagulata protein is ATP phosphoribosyltransferase.